A 458-amino-acid polypeptide reads, in one-letter code: Argininosuccinate lyase (458 aa).

The protein belongs to the lyase 1 family. Argininosuccinate lyase subfamily.

The protein localises to the cytoplasm. The enzyme catalyses 2-(N(omega)-L-arginino)succinate = fumarate + L-arginine. It functions in the pathway amino-acid biosynthesis; L-arginine biosynthesis; L-arginine from L-ornithine and carbamoyl phosphate: step 3/3. This is Argininosuccinate lyase from Geobacter metallireducens (strain ATCC 53774 / DSM 7210 / GS-15).